A 660-amino-acid chain; its full sequence is DNA polymerase alpha-associated DNA helicase A (660 aa).

Position 232-239 (232-239) interacts with ATP; it reads GPPGTGKT.

Belongs to the DNA2/NAM7 helicase family. In terms of assembly, associates with the hexameric DNA polymerase alpha.

It localises to the cytoplasm. The protein localises to the nucleus. It catalyses the reaction ATP + H2O = ADP + phosphate + H(+). DNA polymerase alpha-associated DNA helicase which may be involved in DNA replication. The polypeptide is DNA polymerase alpha-associated DNA helicase A (hcs1) (Schizosaccharomyces pombe (strain 972 / ATCC 24843) (Fission yeast)).